Consider the following 494-residue polypeptide: MHLINAVAAARILSGIGQSNGNNGGEAIPFGSFEWITYAGISCFLVLFAGIMSGLTLGLMSLGLVELEILQRSGTPNEKKQAAAIFPVVQKQHQLLVTLLLCNAMAMEGLPIYLDKLFNEYVAIILSVTFVLAFGEVIPQAICTRYGLAVGANFVWLVRILMTLCYPIAFPIGKILDLVLGHNDALFRRAQLKALVSIHSQEAGKGGELTHDETTIISGALDLTEKTAQEAMTPIESTFSLDVNSKLDWEAMGKILARGHSRVPVYSGNPKNVIGLLLVKSLLTVRPETETLVSAVCIRRIPRVPADMPLYDILNEFQKGSSHMAAVVKVKGKSKVPPSTLLEEHTDESNDSDLTAPLLLKREGNHDNVIVTIDKANGQSFFQNNESGPHGFSHTSEAIEDGEVIGIITLEDVFEELLQEEIVDETDEYVDVHKRIRVAAAAAASSIARAPSSRKLLAQKGTGGQNKQGQTNKVPGQEQDKMLGTITEPIRRNN.

Topologically, residues 1–43 (MHLINAVAAARILSGIGQSNGNNGGEAIPFGSFEWITYAGISC) are extracellular. Residues 31-213 (GSFEWITYAG…GKGGELTHDE (183 aa)) enclose the CNNM transmembrane domain. A helical transmembrane segment spans residues 44–64 (FLVLFAGIMSGLTLGLMSLGL). Over 65–93 (VELEILQRSGTPNEKKQAAAIFPVVQKQH) the chain is Cytoplasmic. Residues 94–114 (QLLVTLLLCNAMAMEGLPIYL) traverse the membrane as a helical segment. At 115-121 (DKLFNEY) the chain is on the extracellular side. Residues 122-142 (VAIILSVTFVLAFGEVIPQAI) form a helical membrane-spanning segment. The Cytoplasmic segment spans residues 143–159 (CTRYGLAVGANFVWLVR). A helical membrane pass occupies residues 160–180 (ILMTLCYPIAFPIGKILDLVL). Over 181–494 (GHNDALFRRA…TITEPIRRNN (314 aa)) the chain is Extracellular. CBS domains lie at 232–292 (MTPI…TETL), 297–352 (CIRR…SNDS), and 364–425 (GNHD…IVDE). N-linked (GlcNAc...) asparagine glycosylation is found at Asn350 and Asn385. The segment at 459-494 (QKGTGGQNKQGQTNKVPGQEQDKMLGTITEPIRRNN) is disordered.

It localises to the membrane. This chain is DUF21 domain-containing protein At4g14240 (CBSDUF1), found in Arabidopsis thaliana (Mouse-ear cress).